The primary structure comprises 281 residues: NADPH-dependent 7-cyano-7-deazaguanine reductase (281 aa).

88–90 is a substrate binding site; sequence IES. 90–91 is a binding site for NADPH; the sequence is SK. Cys-189 functions as the Thioimide intermediate in the catalytic mechanism. Asp-196 acts as the Proton donor in catalysis. A substrate-binding site is contributed by 228–229; it reads HE. Residue 257–258 participates in NADPH binding; that stretch reads RG.

This sequence belongs to the GTP cyclohydrolase I family. QueF type 2 subfamily. As to quaternary structure, homodimer.

It is found in the cytoplasm. It carries out the reaction 7-aminomethyl-7-carbaguanine + 2 NADP(+) = 7-cyano-7-deazaguanine + 2 NADPH + 3 H(+). The protein operates within tRNA modification; tRNA-queuosine biosynthesis. Functionally, catalyzes the NADPH-dependent reduction of 7-cyano-7-deazaguanine (preQ0) to 7-aminomethyl-7-deazaguanine (preQ1). The sequence is that of NADPH-dependent 7-cyano-7-deazaguanine reductase from Proteus mirabilis (strain HI4320).